The sequence spans 2715 residues: Histone-lysine N-methyltransferase 2B (2715 aa).

A compositionally biased stretch (gly residues) spans 1–11 (MAAAAGGGSCP). 4 disordered regions span residues 1–65 (MAAA…GEDT), 81–302 (RRLW…GGLP), 320–518 (SLGL…PKST), and 532–771 (VSAR…QMPP). A2 carries the post-translational modification N-acetylalanine. Over residues 12–24 (GPGSARGRFPGRP) the composition is skewed to low complexity. Positions 17 to 36 (RGRFPGRPRGAGGGGGRGGR) match the Menin-binding motif (MBM) motif. Gly residues-rich tracts occupy residues 25-38 (RGAG…GRGN) and 49-60 (RGGGATGPGGAE). Positions 37-44 (GNGAERVR) form a DNA-binding region, a.T hook 1. Residues 109-123 (PEEESSDGESDEEEF) show a composition bias toward acidic residues. The a.T hook 2 DNA-binding region spans 110-117 (EEESSDGE). Phosphoserine is present on residues S113, S114, and S118. Residues 144–158 (QRGRAPRGRGRKHKT) show a composition bias toward basic residues. Residues 160–176 (PLPPPRLADVAPTPPKT) are compositionally biased toward pro residues. Positions 199 to 208 (RAQAPQAPRS) are enriched in low complexity. S351 bears the Phosphoserine mark. The a.T hook 3 DNA-binding region spans 357 to 365 (QEQKLDDEE). Acidic residues predominate over residues 361–374 (LDDEEEEKKEEEEK). The span at 375-387 (DKEGEEKEERAVA) shows a compositional bias: basic and acidic residues. Positions 401-449 (LPPPPLTPPAPSPPPPLPPPSTSPPPPLCPPPPPPVSPPPLPSPPPPPA) are enriched in pro residues. The segment covering 545–556 (RFMDEDPPKPPK) has biased composition (basic and acidic residues). Over residues 568 to 596 (TTSPPVPQEPAPVPSPPRAPTPPSTPVPL) the composition is skewed to pro residues. Basic and acidic residues predominate over residues 597-608 (PEKRRSILREPT). The span at 618–637 (LPPPPPAPPPPPAPSPPPAP) shows a compositional bias: pro residues. Low complexity predominate over residues 731–751 (PQTQAQLLQPLQALQTQLLPQ). The span at 752–769 (ALPPPQPQLQPPPSPQQM) shows a compositional bias: pro residues. Residue K805 forms a Glycyl lysine isopeptide (Lys-Gly) (interchain with G-Cter in SUMO2) linkage. Disordered regions lie at residues 819–868 (PLSP…GPRI) and 894–959 (SALP…HHGK). 3 positions are modified to phosphoserine: S821, S844, and S861. Positions 836 to 857 (ISDRGPVRSEDESVEAKRERPS) are enriched in basic and acidic residues. The span at 907-917 (EDTSSASETES) shows a compositional bias: low complexity. At S936 the chain carries Phosphoserine. The segment covering 948-959 (TPRRSLPSHHGK) has biased composition (basic residues). Residues 959 to 1006 (KKMRMARCGHCRGCLRVQDCGSCVNCLDKPKFGGPNTKKQCCVYRKCD) form a CXXC-type zinc finger. Zn(2+)-binding residues include C966, C969, C972, C978, C981, C984, C1000, and C1005. The disordered stretch occupies residues 1027 to 1132 (LLPWDSDESP…RPRKPTLQPV (106 aa)). S1032, S1035, S1092, and S1095 each carry phosphoserine. K1136 is covalently cross-linked (Glycyl lysine isopeptide (Lys-Gly) (interchain with G-Cter in SUMO2)). The segment at 1146-1166 (LAPGPFASFPNGWTGKQKSPD) is disordered. 3 PHD-type zinc fingers span residues 1201 to 1252 (PMVC…CKFC), 1249 to 1303 (CKFC…CVRC), and 1335 to 1396 (GNYC…CAGA). In terms of domain architecture, Bromo spans 1404–1504 (ALSGALQGGL…GLLLKLLESA (101 aa)). The tract at residues 1545 to 1567 (QQEPETPESGQPPGDPSAAFQGK) is disordered. The C2HC pre-PHD-type zinc finger occupies 1578-1618 (PRQCALCLKYGDADSKEAGRLLYIGQNEWTHVNCAIWSAEV). A PHD-type 4 zinc finger spans residues 1639 to 1686 (MRCELCLKPGATVGCCLSSCLSNFHFMCARASYCIFQDDKKVFCQKHT). The FYR N-terminal domain maps to 1727–1783 (AINVLIGSIRIDSLGTLSDLSDCEGRLFPIGYQCSRLYWSTVDARRRCWYRCRILEY). 4 disordered regions span residues 1806–1978 (HSPA…PDFE), 2008–2093 (VAAG…VVRA), 2118–2162 (LKNL…PTRT), and 2280–2412 (RVST…RTGP). Positions 1876-1894 (PLGGVSFGPLPSPGSPSSL) are enriched in low complexity. 2 positions are modified to phosphoserine: S1930 and S1936. A compositionally biased stretch (pro residues) spans 1960 to 1972 (PPGPAPSPPPPED). A compositionally biased stretch (acidic residues) spans 2062–2072 (DGVDDGTDSEA). Residues T2068 and T2083 each carry the phosphothreonine modification. Residues 2144–2153 (NGSQPSQGLT) show a composition bias toward polar residues. 2 positions are modified to phosphoserine: S2288 and S2348. The segment covering 2342 to 2351 (EPAGEESPGP) has biased composition (low complexity). Positions 2359–2373 (LPLPEDGPPQVPDGP) are enriched in pro residues. One can recognise an FYR C-terminal domain in the interval 2411–2492 (GPHLRFEISS…QRCQHYKFRY (82 aa)). Residues 2508–2513 (GAARAE) carry the WDR5 interaction motif (WIN) motif. In terms of domain architecture, SET spans 2575-2691 (EAVGVYRSAI…RGEELTYDYK (117 aa)). Residues H2585, R2587, Y2629, and 2652 to 2653 (NH) contribute to the S-adenosyl-L-methionine site. Zn(2+)-binding residues include C2655 and C2703. A Post-SET domain is found at 2699–2715 (NKLPCNCGAKRCRRFLN). Position 2704 (N2704) interacts with S-adenosyl-L-methionine. Zn(2+) is bound by residues C2705 and C2710.

The protein belongs to the class V-like SAM-binding methyltransferase superfamily. Histone-lysine methyltransferase family. TRX/MLL subfamily. Component of the menin-associated histone methyltransferase complex, at least composed of KMT2B/MLL4, ASH2L, RBBP5, WDR5, DPY30, MEN1; the complex interacts with POLR2A and POLR2B via MEN1. Interacts with NFE2. Interacts with KDM6B. Interacts (via WIN motif) with WDR5. Interacts (via MBM motif) with MEN1. Forms a core complex with the evolutionary conserved subcomplex WRAD composed of WDR5, RBBP5, ASH2L/ASH2 and DPY30 subunits; WRAD differentially stimulates the methyltransferase activity. As to expression, widely expressed. Highest levels in testis. Also found in brain with higher expression in the cerebellum than in any other region, bone marrow, heart, muscle, kidney, placenta, spleen, thymus, prostate, ovary, intestine, colon, peripheral blood lymphocytes and pancreas. Often amplified in pancreatic carcinomas.

It is found in the nucleus. The enzyme catalyses L-lysyl(4)-[histone H3] + S-adenosyl-L-methionine = N(6)-methyl-L-lysyl(4)-[histone H3] + S-adenosyl-L-homocysteine + H(+). It carries out the reaction N(6)-methyl-L-lysyl(4)-[histone H3] + S-adenosyl-L-methionine = N(6),N(6)-dimethyl-L-lysyl(4)-[histone H3] + S-adenosyl-L-homocysteine + H(+). In terms of biological role, histone methyltransferase that catalyzes methyl group transfer from S-adenosyl-L-methionine to the epsilon-amino group of 'Lys-4' of histone H3 (H3K4) via a non-processive mechanism. Part of chromatin remodeling machinery predominantly forms H3K4me1 and H3K4me2 methylation marks at active chromatin sites where transcription and DNA repair take place. Likely plays a redundant role with KMT2C in enriching H3K4me1 marks on primed and active enhancer elements. Plays a central role in beta-globin locus transcription regulation by being recruited by NFE2. Plays an important role in controlling bulk H3K4me during oocyte growth and preimplantation development. Required during the transcriptionally active period of oocyte growth for the establishment and/or maintenance of bulk H3K4 trimethylation (H3K4me3), global transcriptional silencing that preceeds resumption of meiosis, oocyte survival and normal zygotic genome activation. In Homo sapiens (Human), this protein is Histone-lysine N-methyltransferase 2B (KMT2B).